The chain runs to 74 residues: Small ribosomal subunit protein uS15 (74 aa).

The protein belongs to the universal ribosomal protein uS15 family. Part of the 30S ribosomal subunit. Forms a bridge to the 50S subunit in the 70S ribosome, contacting the 23S rRNA.

Functionally, one of the primary rRNA binding proteins, it binds directly to 16S rRNA where it helps nucleate assembly of the platform of the 30S subunit by binding and bridging several RNA helices of the 16S rRNA. Its function is as follows. Forms an intersubunit bridge (bridge B4) with the 23S rRNA of the 50S subunit in the ribosome. The polypeptide is Small ribosomal subunit protein uS15 (Onion yellows phytoplasma (strain OY-M)).